The primary structure comprises 241 residues: Transmembrane protein 176A (241 aa).

Residue S38 is modified to Phosphoserine. The next 4 helical transmembrane spans lie at 65–85 (WVMQ…LYIF), 93–113 (SGAP…AFIY), 127–147 (LLAL…AGRF), and 193–213 (LFIS…LASL).

It belongs to the TMEM176 family. As to quaternary structure, interacts with MCOLN2.

Its subcellular location is the membrane. The polypeptide is Transmembrane protein 176A (TMEM176A) (Bos taurus (Bovine)).